Here is a 70-residue protein sequence, read N- to C-terminus: MSSVRVKENEPFDVALRRFKRMIEKTGLLTDLRAREYYEKPTWERKRKAAAAVKRHYRRIRSQTLPTKLY.

It belongs to the bacterial ribosomal protein bS21 family.

This chain is Small ribosomal subunit protein bS21, found in Methylobacillus flagellatus (strain ATCC 51484 / DSM 6875 / VKM B-1610 / KT).